The following is a 347-amino-acid chain: Glycerol-3-phosphate dehydrogenase [NAD(P)+] (347 aa).

Trp20, Arg39, and Lys118 together coordinate NADPH. Lys118, Gly152, and Ser154 together coordinate sn-glycerol 3-phosphate. Ala156 is an NADPH binding site. Lys207, Asp260, Ser270, Arg271, and Asn272 together coordinate sn-glycerol 3-phosphate. Lys207 functions as the Proton acceptor in the catalytic mechanism. Residue Arg271 coordinates NADPH. NADPH contacts are provided by Val295 and Glu297.

This sequence belongs to the NAD-dependent glycerol-3-phosphate dehydrogenase family.

The protein localises to the cytoplasm. It carries out the reaction sn-glycerol 3-phosphate + NAD(+) = dihydroxyacetone phosphate + NADH + H(+). The catalysed reaction is sn-glycerol 3-phosphate + NADP(+) = dihydroxyacetone phosphate + NADPH + H(+). Its pathway is membrane lipid metabolism; glycerophospholipid metabolism. Functionally, catalyzes the reduction of the glycolytic intermediate dihydroxyacetone phosphate (DHAP) to sn-glycerol 3-phosphate (G3P), the key precursor for phospholipid synthesis. The chain is Glycerol-3-phosphate dehydrogenase [NAD(P)+] from Cupriavidus pinatubonensis (strain JMP 134 / LMG 1197) (Cupriavidus necator (strain JMP 134)).